A 386-amino-acid chain; its full sequence is Decapping nuclease RAI1 (386 aa).

Residue Arg34 coordinates substrate. Glu159 is an a divalent metal cation binding site. Substrate is bound at residue Glu205. Residues Asp207, Glu225, and Leu226 each contribute to the a divalent metal cation site. The substrate site is built by Lys227 and Gln251.

It belongs to the DXO/Dom3Z family. In terms of assembly, interacts with RAT1; the interaction is direct, stabilizes RAT1 protein structure and stimulates its exoribonuclease activity. The interaction also stimulates RAI1 pyrophosphohydrolase activity, probably by recruiting it to mRNA substrates. The cofactor is a divalent metal cation.

It localises to the nucleus. It catalyses the reaction a 5'-end NAD(+)-phospho-ribonucleoside in mRNA + H2O = a 5'-end phospho-ribonucleoside in mRNA + NAD(+) + H(+). The catalysed reaction is a 5'-end (N(7)-methyl 5'-triphosphoguanosine)-ribonucleoside-ribonucleotide in mRNA + H2O = a (N(7)-methyl 5'-triphosphoguanosine)-nucleoside + a 5'-end phospho-ribonucleoside in mRNA + H(+). It carries out the reaction a 5'-end triphospho-ribonucleoside in mRNA + H2O = a 5'-end phospho-ribonucleoside in mRNA + diphosphate + H(+). Its function is as follows. Decapping enzyme for NAD-capped RNAs: specifically hydrolyzes the nicotinamide adenine dinucleotide (NAD) cap from a subset of RNAs by removing the entire NAD moiety from the 5'-end of an NAD-capped RNA. The NAD-cap is present at the 5'-end of some RNAs and snoRNAs. In contrast to the canonical 5'-end N7 methylguanosine (m7G) cap, the NAD cap promotes mRNA decay. Also acts as a non-canonical decapping enzyme that removes the entire cap structure of m7G capped or incompletely capped RNAs. Has decapping activity toward incomplete 5'-end m7G cap mRNAs such as unmethylated 5'-end-capped RNA (cap0), while it has no activity toward 2'-O-ribose methylated m7G cap (cap1). Also possesses RNA 5'-pyrophosphohydrolase activity by hydrolyzing the 5'-end triphosphate to release pyrophosphates. Stimulates exoribonuclease activity of Rat1, allowing it to degrade RNAs with stable secondary structure more effectively. This is Decapping nuclease RAI1 (RAI1) from Cryptococcus neoformans var. neoformans serotype D (strain B-3501A) (Filobasidiella neoformans).